A 1029-amino-acid chain; its full sequence is Myosin phosphatase Rho-interacting protein (1029 aa).

Positions 1–387 (MSAAKENPCR…DRRSTESSMT (387 aa)) are interaction with F-actin. The region spanning 43–150 (KPIYGGWLLL…WLEMLMVYPR (108 aa)) is the PH 1 domain. The segment at 152 to 267 (NKQNQKKKRK…GDRVDGGRKV (116 aa)) is disordered. Positions 179-195 (SSSGGSSGSSSSSSSSS) are enriched in low complexity. Phosphoserine is present on residues serine 198, serine 224, serine 226, serine 230, and serine 232. Residues 226–237 (SPVQSPSQSQPP) are compositionally biased toward low complexity. Over residues 245–267 (TGLDSKEDENILSGDRVDGGRKV) the composition is skewed to basic and acidic residues. Phosphoserine is present on residues serine 271, serine 275, serine 294, and serine 297. Disordered regions lie at residues 279 to 306 (AKQDLRAEEQLPPLLSPPSPSTPHSRRS) and 333 to 383 (PSSD…RSTE). Threonine 300 carries the phosphothreonine modification. The span at 338-354 (RQGRSERRAIPRKRDFA) shows a compositional bias: basic and acidic residues. Position 369 is a phosphoserine (serine 369). A PH 2 domain is found at 391–487 (LNFKKGWLTK…WIQTIMKHVL (97 aa)). The disordered stretch occupies residues 490–614 (SAPDVTSSLP…NDGPGMEDTA (125 aa)). Over residues 492–509 (PDVTSSLPEGKNKSTSFD) the composition is skewed to polar residues. A Phosphoserine modification is found at serine 497. The segment covering 527-550 (PEQKKSRARERRREGRSKTFDWAE) has biased composition (basic and acidic residues). The segment at 550–828 (EFRPIQQALA…SVQRELEVLS (279 aa)) is interaction with RHOA. The span at 562-571 (RASTVGSSDS) shows a compositional bias: polar residues. Basic and acidic residues predominate over residues 583-592 (ELERERARRR). The residue at position 622 (serine 622) is a Phosphoserine. Threonine 650 carries the phosphothreonine modification. Positions 675–979 (STHELTSLLE…LKAATEALGE (305 aa)) form a coiled coil. Phosphoserine is present on serine 804. Residues 828–883 (SEQYSQKCLENAHLAQALEAERQALRQCQRENQELNAHNQELNNRLAAEITRLRTL) are interaction with PPP1R12A. A phosphoserine mark is found at serine 981, serine 997, serine 1018, and serine 1020.

Binds RHOA, PPP1R12A/MBS and PPP1R12C/MBS85 through adjacent coiled coil domains. Interacts with MYZAP. Binds F-actin through its N-terminus.

The protein resides in the cytoplasm. Its subcellular location is the cytoskeleton. Targets myosin phosphatase to the actin cytoskeleton. Required for the regulation of the actin cytoskeleton by RhoA and ROCK1. Depletion leads to an increased number of stress fibers in smooth muscle cells through stabilization of actin fibers by phosphorylated myosin. Overexpression of MRIP as well as its F-actin-binding region leads to disassembly of stress fibers in neuronal cells. The sequence is that of Myosin phosphatase Rho-interacting protein (Mprip) from Rattus norvegicus (Rat).